A 317-amino-acid chain; its full sequence is MVSFASETKKELTNLEMKECCEKAELSALLRMNGSLSFSNRRLSIDIQTENAAIARRIYTLLKKGYDVTVELLVRKKMRLKKNNVYIVRLVEKSREILADLHIVRDDFSFIRNISQELIEKKCCKRSYLRGAFLAGGSVNNPETSSYHLEIFSLYKEHNDAICELMNGFDLNSKTLERRKGYITYLKEAEKITEFLNIIGAHNALLRFEDIRIVRDMRNSVNRLVNCETANLNKTIGAALRQIENIRYIDETVGLDILPDKLREIAQLRRDYQDVTLKELGEMVSGGKISKSGINHRLRKIDDIAEKLRAGETVAKK.

Residues 276–310 constitute a DNA-binding region (H-T-H motif); that stretch reads TLKELGEMVSGGKISKSGINHRLRKIDDIAEKLRA.

It belongs to the WhiA family.

Involved in cell division and chromosome segregation. In Bacillus thuringiensis (strain Al Hakam), this protein is Probable cell division protein WhiA.